A 144-amino-acid polypeptide reads, in one-letter code: MADRLTQLQDAVNSLADQFCNAIGVLQQCGPPASFSNIQTAINKDQPANPTEEYAQLFAALIARTAKDIDVLIDSLPSEESTAALQAASLYKLEEENHEAATSLEDVVYRGDMLLEKIQSALADIAQSQLKTRSGTHSQSLPDS.

It belongs to the Mediator complex subunit 21 family. Component of the Mediator complex, which is composed of MED1, MED4, MED6, MED7, MED8, MED9, MED10, MED11, MED12, MED13, MED13L, MED14, MED15, MED16, MED17, MED18, MED19, MED20, MED21, MED22, MED23, MED24, MED25, MED26, MED27, MED29, MED30, MED31, CCNC, CDK8 and CDC2L6/CDK11. The MED12, MED13, CCNC and CDK8 subunits form a distinct module termed the CDK8 module. Mediator containing the CDK8 module is less active than Mediator lacking this module in supporting transcriptional activation. Individual preparations of the Mediator complex lacking one or more distinct subunits have been variously termed ARC, CRSP, DRIP, PC2, SMCC and TRAP. Interacts with PPARG. Interacts with THRA in a ligand-dependent fashion.

Its subcellular location is the nucleus. Functionally, component of the Mediator complex, a coactivator involved in the regulated transcription of nearly all RNA polymerase II-dependent genes. Mediator functions as a bridge to convey information from gene-specific regulatory proteins to the basal RNA polymerase II transcription machinery. Mediator is recruited to promoters by direct interactions with regulatory proteins and serves as a scaffold for the assembly of a functional preinitiation complex with RNA polymerase II and the general transcription factors. The protein is Mediator of RNA polymerase II transcription subunit 21 (MED21) of Bos taurus (Bovine).